Reading from the N-terminus, the 678-residue chain is NADPH--cytochrome P450 reductase (678 aa).

N-acetylglycine is present on Gly2. Residues 2-22 (GDSHEDTSATVPEAVAEEVSL) lie on the Lumenal side of the membrane. A helical transmembrane segment spans residues 23 to 43 (FSTTDIVLFSLIVGVLTYWFI). At 44 to 678 (FKKKKEEIPE…KGRYSLDVWS (635 aa)) the chain is on the cytoplasmic side. Residues 80–224 (IIVFYGSQTG…DFITWREQFW (145 aa)) form the Flavodoxin-like domain. FMN contacts are provided by residues 86–91 (SQTGTA), 138–141 (ATYG), 173–182 (LGNKTYEHFN), and Asp208. An FAD-binding FR-type domain is found at 279 to 521 (KNPFLAAVTT…FVRKSQFRLP (243 aa)). Arg298 contributes to the NADP(+) binding site. FAD-binding positions include Arg424, 454–457 (RYYS), 472–474 (CAV), Tyr478, and 488–491 (GVAT). NADP(+) is bound by residues Thr535, 596 to 597 (SR), 602 to 606 (KVYVQ), and Asp639. Trp677 lines the FAD pocket.

Belongs to the NADPH--cytochrome P450 reductase family. The protein in the N-terminal section; belongs to the flavodoxin family. This sequence in the C-terminal section; belongs to the flavoprotein pyridine nucleotide cytochrome reductase family. It depends on FAD as a cofactor. FMN serves as cofactor.

It localises to the endoplasmic reticulum membrane. The enzyme catalyses 2 oxidized [cytochrome P450] + NADPH = 2 reduced [cytochrome P450] + NADP(+) + H(+). Its function is as follows. This enzyme is required for electron transfer from NADP to cytochrome P450 in microsomes. It can also provide electron transfer to heme oxygenase and cytochrome B5. This chain is NADPH--cytochrome P450 reductase, found in Mus musculus (Mouse).